The following is a 281-amino-acid chain: Acidic leucine-rich nuclear phosphoprotein 32-related protein (281 aa).

LRR repeat units follow at residues 29-52 (YESLNELILDGKKLTSIKNEEKEL), 56-78 (FKNLERLCLNQTGIQTLENIPSI), 79-103 (ATLNVLELTDNHLSSVEVLKYIVQN), and 105-128 (PNIKTLEIGGNHFKNINDFETLKE). Residues 140-178 (NPFADNPNYRKELFEFLPNVKIIDCYNKEGMEVLSSDEE) enclose the LRRCT domain. A compositionally biased stretch (acidic residues) spans 197-244 (FKDEDDEDEEFVPNDNEDDDEDDELDDDLEDEDMEDLDKEDLDKEDYD). Residues 197–281 (FKDEDDEDEE…DMDLKKTKLE (85 aa)) form a disordered region. The segment covering 245–266 (IDTKETEGVNKDEKSNKRKQDA) has biased composition (basic and acidic residues).

The protein belongs to the ANP32 family.

The chain is Acidic leucine-rich nuclear phosphoprotein 32-related protein from Plasmodium falciparum (isolate 3D7).